Reading from the N-terminus, the 274-residue chain is Diaminopimelate epimerase (274 aa).

Asn11, Gln44, and Asn64 together coordinate substrate. Cys73 functions as the Proton donor in the catalytic mechanism. Substrate-binding positions include 74–75 (GN), Asn157, Asn190, and 208–209 (ER). Residue Cys217 is the Proton acceptor of the active site. A substrate-binding site is contributed by 218 to 219 (GS).

This sequence belongs to the diaminopimelate epimerase family. As to quaternary structure, homodimer.

Its subcellular location is the cytoplasm. It carries out the reaction (2S,6S)-2,6-diaminopimelate = meso-2,6-diaminopimelate. It participates in amino-acid biosynthesis; L-lysine biosynthesis via DAP pathway; DL-2,6-diaminopimelate from LL-2,6-diaminopimelate: step 1/1. Its function is as follows. Catalyzes the stereoinversion of LL-2,6-diaminopimelate (L,L-DAP) to meso-diaminopimelate (meso-DAP), a precursor of L-lysine and an essential component of the bacterial peptidoglycan. This chain is Diaminopimelate epimerase, found in Edwardsiella ictaluri (strain 93-146).